A 1110-amino-acid chain; its full sequence is MTDVDPHATRRDLVPNIPAELLEAGFDNVEEIGRGGFGVVYRCVQPSLDRAVAVKVLSTDLDRDNLERFLREQRAMGRLSGHPHIVTVLQVGVLAGGRPFIVMPYHAKNSLETLIRRHGPLDWRETLSIGVKLAGALEAAHRVGTLHRDVKPGNILLTDYGEPQLTDFGIARIAGGFETATGVIAGSPAFTAPEVLEGASPTPASDVYSLGATLFCVLTGHAAYERRSGERVIAQFLRITSQPIPDLRKQGLPADVAAAIERAMARHPADRPATAADVGEELRDVQRRNGVSVDEMPLPVELGVERRRSPEAHAAHRHTGGGTPTVPTPPTPATKYRPSVPTGSLVTRSRLTDILRAGGRRRLILIHAPSGFGKSTLAAQWREELSRDGAAVAWLTIDNDDNNEVWFLSHLLESIRRVRPTLAESLGHVLEEHGDDAGRYVLTSLIDEIHENDDRIAVVIDDWHRVSDSRTQAALGFLLDNGCHHLQLIVTSWSRAGLPVGRLRIGDELAEIDSAALRFDTDEAAALLNDAGGLRLPRADVQALTTSTDGWAAALRLAALSLRGGGDATQLLRGLSGASDVIHEFLSENVLDTLEPELREFLLVASVTERTCGGLASALAGITNGRAMLEEAEHRGLFLQRTEDDPNWFRFHQMFADFLHRRLERGGSHRVAELHRRASAWFAENGYLHEAVDHALAAGDPARAVDLVEQDETNLPEQSKMTTLLAIVQKLPTSMVVSRARLQLAIAWANILLQRPAPATGALNRFETALGRAELPEATQADLRAEADVLRAVAEVFADRVERVDDLLAEAMSRPDTLPPRVPGTAGNTAALAAICRFEFAEVYPLLDWAAPYQEMMGPFGTVYAQCLRGMAARNRLDIVAALQNFRTAFEVGTAVGAHSHAARLAGSLLAELLYETGDLAGAGRLMDESYLLGSEGGAVDYLAARYVIGARVKAAQGDHEGAADRLSTGGDTAVQLGLPRLAARINNERIRLGIALPAAVAADLLAPRTIPRDNGIATMTAELDEDSAVRLLSAGDSADRDQACQRAGALAAAIDGTRRPLAALQAQILHIETLAATGRESDARNELAPVATKCAELGLSRLLVDAGLA.

Residues 26–283 enclose the Protein kinase domain; the sequence is FDNVEEIGRG…TAADVGEELR (258 aa). ATP is bound by residues 32–40 and Lys-55; that span reads IGRGGFGVV. Residue Arg-148 is the Proton acceptor of the active site. Positions 154 and 167 each coordinate Mg(2+). A disordered region spans residues 308–343; sequence RSPEAHAAHRHTGGGTPTVPTPPTPATKYRPSVPTG.

Belongs to the protein kinase superfamily. Ser/Thr protein kinase family.

The enzyme catalyses L-seryl-[protein] + ATP = O-phospho-L-seryl-[protein] + ADP + H(+). It carries out the reaction L-threonyl-[protein] + ATP = O-phospho-L-threonyl-[protein] + ADP + H(+). In Mycobacterium bovis (strain ATCC BAA-935 / AF2122/97), this protein is Serine/threonine-protein kinase PknK (pknK).